The primary structure comprises 335 residues: 2-acylglycerol O-acyltransferase 1 (335 aa).

2 helical membrane-spanning segments follow: residues 24 to 44 (WVFSFLLLAQCCIGIFLSLVL) and 47 to 67 (LWLILALYVLWLYLDWETPQA). Residues Asn77, Asn125, and Asn180 are each glycosylated (N-linked (GlcNAc...) asparagine).

The protein belongs to the diacylglycerol acyltransferase family.

Its subcellular location is the endoplasmic reticulum membrane. It catalyses the reaction a 2-acylglycerol + an acyl-CoA = a 1,2-diacylglycerol + CoA. The catalysed reaction is a 2-acylglycerol + an acyl-CoA = a 1,2-diacyl-sn-glycerol + CoA. The enzyme catalyses a 2-acylglycerol + an acyl-CoA = a 2,3-diacyl-sn-glycerol + CoA. It carries out the reaction a 1-acylglycerol + an acyl-CoA = a 1,2-diacylglycerol + CoA. It catalyses the reaction a 1-acylglycerol + an acyl-CoA = a 1,3-diacylglycerol + CoA. The catalysed reaction is a 1-acyl-sn-glycerol + an acyl-CoA = a 1,3-diacyl-sn-glycerol + CoA. The enzyme catalyses a 3-acyl-sn-glycerol + an acyl-CoA = a 1,3-diacyl-sn-glycerol + CoA. Its pathway is glycerolipid metabolism; triacylglycerol biosynthesis. Involved in glycerolipid synthesis and lipid metabolism. Catalyzes the formation of diacylglycerol, the precursor of triacylglycerol, by transferring the acyl chain of a fatty acyl-CoA to a monoacylglycerol, mainly at the sn-1 or sn-3 positions. It uses both sn-2-monoacylglycerol (2-acylglycerol) and sn-1-monoacylglycerol (1-acyl-sn-glycerol) equally well as substrates, and uses sn-3-monoacylglycerol (3-acyl-sn-glycerol) with lower efficiency. This chain is 2-acylglycerol O-acyltransferase 1 (mogat1), found in Xenopus tropicalis (Western clawed frog).